The following is a 441-amino-acid chain: Glutamate--tRNA ligase 2 (441 aa).

The 'HIGH' region motif lies at 9–19 (PSPTGYIHVGN). Residues 239-243 (ALSKR) carry the 'KMSKS' region motif. Lys-242 is an ATP binding site.

It belongs to the class-I aminoacyl-tRNA synthetase family. Glutamate--tRNA ligase type 1 subfamily. As to quaternary structure, monomer.

Its subcellular location is the cytoplasm. It catalyses the reaction tRNA(Glu) + L-glutamate + ATP = L-glutamyl-tRNA(Glu) + AMP + diphosphate. Its function is as follows. Catalyzes the attachment of glutamate to tRNA(Glu) in a two-step reaction: glutamate is first activated by ATP to form Glu-AMP and then transferred to the acceptor end of tRNA(Glu). This Cereibacter sphaeroides (strain ATCC 17023 / DSM 158 / JCM 6121 / CCUG 31486 / LMG 2827 / NBRC 12203 / NCIMB 8253 / ATH 2.4.1.) (Rhodobacter sphaeroides) protein is Glutamate--tRNA ligase 2.